A 201-amino-acid chain; its full sequence is NADH-quinone oxidoreductase subunit C (201 aa).

The protein belongs to the complex I 30 kDa subunit family. In terms of assembly, NDH-1 is composed of 14 different subunits. Subunits NuoB, C, D, E, F, and G constitute the peripheral sector of the complex.

The protein resides in the cell inner membrane. The catalysed reaction is a quinone + NADH + 5 H(+)(in) = a quinol + NAD(+) + 4 H(+)(out). Functionally, NDH-1 shuttles electrons from NADH, via FMN and iron-sulfur (Fe-S) centers, to quinones in the respiratory chain. The immediate electron acceptor for the enzyme in this species is believed to be ubiquinone. Couples the redox reaction to proton translocation (for every two electrons transferred, four hydrogen ions are translocated across the cytoplasmic membrane), and thus conserves the redox energy in a proton gradient. In Aromatoleum aromaticum (strain DSM 19018 / LMG 30748 / EbN1) (Azoarcus sp. (strain EbN1)), this protein is NADH-quinone oxidoreductase subunit C.